Here is a 337-residue protein sequence, read N- to C-terminus: MFKKKAKEEKPSPVPDAQQNGELPNSGPIIYYIYESEEEEEEEEEEPPPEPPRPVNDKPHKFKDHYLKKPKFCDVCARMIVLNNKFGLRCKNCKTNIHHHCQSYVEFQKCFGKIPPGFRRAYSSPLYSNQQNACVKELMPFSASNRTDPVFDTLRVGVIMANKERKKGQDDKKNPMLEEEPEELPPKPEEKQEGDVPDGDKKGEKGGQDAKNKKAQPGFMQSHYFVALYRFKALEKDDLDFQAGERITVIDDSNEEWWRGKVGEKAGYFPANFIIRVRAAERVYKVTRSFVGNREIGQITLKKDQIVVQKGDEVNGYIKVSTGRKVGLFPLDFLQEI.

The span at 1 to 11 (MFKKKAKEEKP) shows a compositional bias: basic and acidic residues. 2 disordered regions span residues 1–61 (MFKK…KPHK) and 162–215 (NKER…NKKA). A compositionally biased stretch (acidic residues) spans 35 to 48 (ESEEEEEEEEEEPP). A Phorbol-ester/DAG-type zinc finger spans residues 59-110 (PHKFKDHYLKKPKFCDVCARMIVLNNKFGLRCKNCKTNIHHHCQSYVEFQKC). Basic and acidic residues-rich tracts occupy residues 167–176 (KGQDDKKNPM) and 184–212 (LPPK…DAKN). 2 consecutive SH3 domains span residues 220–279 (MQSH…RVRA) and 280–337 (AERV…LQEI).

Component of a calcium channel complex with CACNA1S.

Its subcellular location is the cytoplasm. It localises to the cell membrane. It is found in the sarcolemma. The protein localises to the T-tubule. Required for normal excitation-contraction coupling in skeletal muscle and for normal muscle contraction in response to membrane depolarization. Required for normal Ca(2+) release from the sarcplasmic reticulum, which ultimately leads to muscle contraction. Probably functions via its effects on muscle calcium channels. Increases CACNA1S channel activity, in addition to its role in enhancing the expression of CACNA1S at the cell membrane. Has a redundant role in promoting the expression of the calcium channel CACNA1S at the cell membrane. This chain is SH3 and cysteine-rich domain-containing protein 3 (stac3), found in Xenopus tropicalis (Western clawed frog).